Here is a 680-residue protein sequence, read N- to C-terminus: Zinc finger protein OBI1 (680 aa).

The 72-residue stretch at valine 16–glycine 87 folds into the KRAB domain. A C2H2-type 1; degenerate zinc finger spans residues cysteine 263–histidine 280. 8 C2H2-type zinc fingers span residues phenylalanine 455–histidine 477, histidine 483–histidine 505, tyrosine 511–histidine 533, phenylalanine 539–histidine 561, histidine 567–histidine 589, tyrosine 595–histidine 617, tyrosine 623–histidine 645, and phenylalanine 651–histidine 673.

Polyubiquitinated, leading to its degradation via the ubiquitin-proteasome pathway. As to expression, expressed during osteogenic differentiation where levels increase from the first days of differentiation and remain high during the whole process. Highly expressed in lung.

The protein resides in the nucleus. Functionally, may modulate osteogenic differentiation, at least in part, through the bone morphogenetic protein (BMP) signaling pathway, increasing RUNX2 activation and leading to osteoblast commitment and maturation. The protein is Zinc finger protein OBI1 (ObI1) of Mus musculus (Mouse).